The chain runs to 509 residues: O-acetyltransferase anaAT (509 aa).

Belongs to the fumigaclavine B O-acetyltransferase family. As to quaternary structure, monomer.

The enzyme catalyses (2R,3S,11R)-aszonalenin + acetyl-CoA = (2R,3S,11R)-acetylaszonalenin + CoA. Its pathway is alkaloid biosynthesis. In terms of biological role, O-acetyltransferase; part of the gene cluster that mediates the biosynthesis of the prenylated pyrroloindoline diketopiperazine acetylaszonalenin. The first step in the pathway is the formation of (R)-benzodiazepinedione by condensation of tryptophan and anthranilic acid catalyzed by the non-ribosomal peptide synthetase anaPS. The prenyltransferase anaPT then converts (R)-benzodiazepinedione to aszonalenin in the presence of dimethylallyl diphosphate (DMAPP) via C3-prenylation. The last step in the biosynthesis of acetylaszonalenin via acetylation of aszonalenin at position N1 catalyzed by anaAT. This is O-acetyltransferase anaAT from Neosartorya fischeri (strain ATCC 1020 / DSM 3700 / CBS 544.65 / FGSC A1164 / JCM 1740 / NRRL 181 / WB 181) (Aspergillus fischerianus).